Here is a 3259-residue protein sequence, read N- to C-terminus: Golgin subfamily B member 1 (3259 aa).

N-acetylmethionine is present on M1. The Cytoplasmic segment spans residues 1–3235 (MLSRLSGLAN…LRSLCHSRTR (3235 aa)). S6, S17, S138, and S528 each carry phosphoserine. The stretch at 48–593 (EDVQERLAYA…RAEEADHEVL (546 aa)) forms a coiled coil. Residues 119 to 142 (GTVLPTEPQSEEQLSKHDKSSTEE) form a disordered region. Residues 131–142 (QLSKHDKSSTEE) show a composition bias toward basic and acidic residues. A disordered region spans residues 624-652 (LMPNEESSLPAVEKEQASTEHQSRTSEEI). Basic and acidic residues predominate over residues 635 to 650 (VEKEQASTEHQSRTSE). Position 653 is a phosphoserine (S653). Coiled-coil stretches lie at residues 677 to 1028 (DIGQ…KEIP), 1062 to 1245 (LKQT…ESID), and 1301 to 1779 (GTSV…TEKH). The segment at 944–963 (AKKEQVEEDNEVSSGLKQNY) is disordered. Residues 1747-1763 (SEKDSLSEEVQDLKHQI) show a composition bias toward basic and acidic residues. The interval 1747–1829 (SEKDSLSEEV…SANPAVSKDF (83 aa)) is disordered. Polar residues-rich tracts occupy residues 1782 to 1794 (QTNV…QSIP) and 1802 to 1820 (SLSM…SAKS). Positions 1828–3185 (DFSSHDEINN…EQIRRLEHSE (1358 aa)) form a coiled coil. S2216, S2735, S2872, and S2884 each carry phosphoserine. Positions 2856–2876 (RKSEEGKQRSAAQPSTSPAEV) are disordered. Polar residues predominate over residues 2865–2875 (SAAQPSTSPAE). Residues 2998–3021 (TQPLKVQYQRQASPETSASPDGSQ) are disordered. Residue S3037 is modified to Phosphoserine. A disordered region spans residues 3107 to 3140 (IDVAPGAPQEKNGVHRKSDPEELREPQQSFSEAQ). A compositionally biased stretch (basic and acidic residues) spans 3118 to 3131 (NGVHRKSDPEELRE). The chain crosses the membrane as a helical span at residues 3236 to 3256 (VPLLAAIYFLMIHVLLILCFT). Residues 3257–3259 (GHL) lie on the Lumenal side of the membrane.

In terms of assembly, homodimer; disulfide-linked. Interacts with PLK3.

It localises to the golgi apparatus membrane. In terms of biological role, may participate in forming intercisternal cross-bridges of the Golgi complex. This chain is Golgin subfamily B member 1 (GOLGB1), found in Homo sapiens (Human).